Reading from the N-terminus, the 76-residue chain is Putative defensin-like protein 62 (76 aa).

An N-terminal signal peptide occupies residues 1-26; it reads MDVTKTYVTIFVVAILTISVLIQIQQ. 4 disulfides stabilise this stretch: Cys30–Cys71, Cys34–Cys57, Cys43–Cys69, and Cys47–Cys70.

Belongs to the DEFL family.

It is found in the secreted. The chain is Putative defensin-like protein 62 from Arabidopsis thaliana (Mouse-ear cress).